Consider the following 125-residue polypeptide: Phosphoribosyl-AMP cyclohydrolase (125 aa).

Aspartate 74 contacts Mg(2+). Zn(2+) is bound at residue cysteine 75. Mg(2+) contacts are provided by aspartate 76 and aspartate 78. Zn(2+) contacts are provided by cysteine 92 and cysteine 99.

Belongs to the PRA-CH family. As to quaternary structure, homodimer. Mg(2+) serves as cofactor. Requires Zn(2+) as cofactor.

The protein resides in the cytoplasm. It catalyses the reaction 1-(5-phospho-beta-D-ribosyl)-5'-AMP + H2O = 1-(5-phospho-beta-D-ribosyl)-5-[(5-phospho-beta-D-ribosylamino)methylideneamino]imidazole-4-carboxamide. The protein operates within amino-acid biosynthesis; L-histidine biosynthesis; L-histidine from 5-phospho-alpha-D-ribose 1-diphosphate: step 3/9. Functionally, catalyzes the hydrolysis of the adenine ring of phosphoribosyl-AMP. The sequence is that of Phosphoribosyl-AMP cyclohydrolase from Geobacter sulfurreducens (strain ATCC 51573 / DSM 12127 / PCA).